We begin with the raw amino-acid sequence, 723 residues long: Zinc finger CCCH domain-containing protein 11A (723 aa).

3 C3H1-type zinc fingers span residues 2–29 (SKQGDDCYFYFYSTCNKGDNCPFRHCEA), 31–57 (LGNETICTLWKEGRCFRNVCRFRHMEI), and 60–87 (KRSEIPCFWENQPGGCQKSNCAFHHTKG). Disordered stretches follow at residues 142–208 (ENSE…KQDD), 223–256 (KKQKEKTKKQSEGPSGVPAHPLQSRTVPVPEKEN), 404–428 (KRAEGERKKQRILPPSVPGKVKLEE), 450–526 (EKAL…VKSL), and 565–681 (VKPS…APLS). The segment covering 160 to 175 (ADDDEDDDDQLSEEGE) has biased composition (acidic residues). Residues 376–411 (KTFSEALAERKQRRLEEEKQKLEEFLTEKRAEGERK) are a coiled coil. Residues 511 to 522 (PSNQSAPNSKAQ) are compositionally biased toward polar residues. The span at 609-620 (KKAALTAAPALP) shows a compositional bias: low complexity. The span at 637-649 (LELQLGSQADSVE) shows a compositional bias: polar residues. Over residues 650–672 (QSGDSSSASASSQSVAKAQQLSS) the composition is skewed to low complexity.

It localises to the nucleus speckle. In terms of biological role, through its association with TREX complex components, may participate in the export and post-transcriptional coordination of selected mRNA transcripts. Binds RNA. The protein is Zinc finger CCCH domain-containing protein 11A (ZC3H11A) of Gallus gallus (Chicken).